A 329-amino-acid polypeptide reads, in one-letter code: Ornithine carbamoyltransferase (329 aa).

Carbamoyl phosphate is bound by residues 51–54 (STRT), Gln-78, Arg-102, and 129–132 (HPVQ). L-ornithine is bound by residues Asn-174, Asp-238, and 242–243 (SM). Residues 278-279 (CL) and Arg-306 contribute to the carbamoyl phosphate site.

The protein belongs to the aspartate/ornithine carbamoyltransferase superfamily. OTCase family.

It is found in the cytoplasm. The enzyme catalyses carbamoyl phosphate + L-ornithine = L-citrulline + phosphate + H(+). It participates in amino-acid biosynthesis; L-arginine biosynthesis; L-arginine from L-ornithine and carbamoyl phosphate: step 1/3. In terms of biological role, reversibly catalyzes the transfer of the carbamoyl group from carbamoyl phosphate (CP) to the N(epsilon) atom of ornithine (ORN) to produce L-citrulline. The protein is Ornithine carbamoyltransferase of Helicobacter hepaticus (strain ATCC 51449 / 3B1).